We begin with the raw amino-acid sequence, 164 residues long: Protein SprT (164 aa).

Residues 14–156 (QLAESFFKRP…LCRRCRQTLV (143 aa)) enclose the SprT-like domain. Zn(2+) is bound at residue histidine 69. Glutamate 70 is a catalytic residue. Zn(2+) is bound at residue histidine 73.

The protein belongs to the SprT family. The cofactor is Zn(2+).

The protein localises to the cytoplasm. The polypeptide is Protein SprT (Pseudomonas fluorescens (strain ATCC BAA-477 / NRRL B-23932 / Pf-5)).